Reading from the N-terminus, the 216-residue chain is Pyrophosphatase PpaX (216 aa).

The active-site Nucleophile is the aspartate 9.

It belongs to the HAD-like hydrolase superfamily. PpaX family. Mg(2+) serves as cofactor.

The catalysed reaction is diphosphate + H2O = 2 phosphate + H(+). Functionally, hydrolyzes pyrophosphate formed during P-Ser-HPr dephosphorylation by HPrK/P. Might play a role in controlling the intracellular pyrophosphate pool. This is Pyrophosphatase PpaX from Bacillus cereus (strain AH820).